A 348-amino-acid chain; its full sequence is Actin maturation protease (348 aa).

Over residues 1-18 (MISPCSPPLEPPVPPPET) the composition is skewed to pro residues. Residues 1–64 (MISPCSPPLE…LPPPPRTTGF (64 aa)) form a disordered region. The segment covering 34–48 (NLPELAFPPSSFQAS) has biased composition (low complexity). A compositionally biased stretch (pro residues) spans 49 to 60 (VPPPPPLPPPPR). Positions 121 to 241 (SLIQEGPQCG…WAVSAGVLLG (121 aa)) are peptidase C39-like. Residue Cys-129 is part of the active site. At Ser-313 the chain carries Phosphoserine.

It belongs to the ACTMAP family. Interacts (via N-terminus) with PFN2; the interaction may facilitate efficient cleavage of the acetylated N-terminus of immature actin. Interacts with PFN1.

The protein resides in the cytoplasm. It carries out the reaction N-terminal N(alpha)-acetyl-L-methionyl-L-aspartyl-[protein] + H2O = N-terminal L-aspartyl-[protein] + N-acetyl-L-methionine. The enzyme catalyses N-terminal N(alpha)-acetyl-L-methionyl-L-glutamyl-[protein] + H2O = N-terminal L-glutamyl-[protein] + N-acetyl-L-methionine. The catalysed reaction is N-terminal N(alpha)-acetyl-L-cysteinyl-L-aspartyl-[protein] + H2O = N-terminal L-aspartyl-[protein] + N-acetyl-L-cysteine. It catalyses the reaction N-terminal N(alpha)-acetyl-L-cysteinyl-L-glutamyl-[protein] + H2O = N-terminal L-glutamyl-[protein] + N-acetyl-L-cysteine. Actin maturation protease that specifically mediates the cleavage of immature acetylated N-terminal actin, thereby contributing to actin maturation. Cleaves N-terminal acetylated methionine of immature cytoplasmic beta- and gamma-actins ACTB and ACTG1 after translation. Cleaves N-terminal acetylated cysteine of muscle alpha-actins ACTA1, ACTC1 and ACTA2 after canonical removal of N-terminal methionine. The sequence is that of Actin maturation protease from Bos taurus (Bovine).